The chain runs to 500 residues: Lysine--tRNA ligase (500 aa).

The Mg(2+) site is built by Glu410 and Glu417.

The protein belongs to the class-II aminoacyl-tRNA synthetase family. As to quaternary structure, homodimer. Mg(2+) is required as a cofactor.

It is found in the cytoplasm. It catalyses the reaction tRNA(Lys) + L-lysine + ATP = L-lysyl-tRNA(Lys) + AMP + diphosphate. The protein is Lysine--tRNA ligase of Pseudomonas syringae pv. syringae (strain B728a).